Consider the following 481-residue polypeptide: Vanillin dehydrogenase (481 aa).

An NAD(+)-binding site is contributed by 228 to 233 (GSTHVG). Catalysis depends on residues Glu-250 and Cys-284.

It belongs to the aldehyde dehydrogenase family.

The catalysed reaction is vanillin + NAD(+) + H2O = vanillate + NADH + 2 H(+). Its function is as follows. Catalyzes the NAD-dependent oxidation of vanillin to vanillic acid. This Pseudomonas sp. (strain HR199 / DSM 7063) protein is Vanillin dehydrogenase (vdh).